The sequence spans 103 residues: Large ribosomal subunit protein bL21 (103 aa).

It belongs to the bacterial ribosomal protein bL21 family. As to quaternary structure, part of the 50S ribosomal subunit. Contacts protein L20.

This protein binds to 23S rRNA in the presence of protein L20. In Desulfitobacterium hafniense (strain DSM 10664 / DCB-2), this protein is Large ribosomal subunit protein bL21.